Consider the following 229-residue polypeptide: Uracil-DNA glycosylase (229 aa).

Aspartate 72 functions as the Proton acceptor in the catalytic mechanism.

Belongs to the uracil-DNA glycosylase (UDG) superfamily. UNG family.

It localises to the cytoplasm. The catalysed reaction is Hydrolyzes single-stranded DNA or mismatched double-stranded DNA and polynucleotides, releasing free uracil.. In terms of biological role, excises uracil residues from the DNA which can arise as a result of misincorporation of dUMP residues by DNA polymerase or due to deamination of cytosine. In Dichelobacter nodosus (strain VCS1703A), this protein is Uracil-DNA glycosylase.